Reading from the N-terminus, the 708-residue chain is Lactotransferrin (708 aa).

A signal peptide spans 1 to 19 (MKLLFLALLSLLALGPSLA). Transferrin-like domains lie at 25 to 352 (VRWC…NLKE) and 364 to 693 (VVWC…NLRQ). Disulfide bonds link cysteine 28-cysteine 64 and cysteine 38-cysteine 55. Aspartate 79 lines the Fe(3+) pocket. Arginine 92 is a catalytic residue. Tyrosine 111 contacts Fe(3+). Intrachain disulfides connect cysteine 134-cysteine 217, cysteine 176-cysteine 192, cysteine 179-cysteine 202, cysteine 189-cysteine 200, and cysteine 250-cysteine 264. Threonine 136 lines the hydrogencarbonate pocket. The N-linked (GlcNAc...) asparagine glycan is linked to asparagine 139. Positions 140, 142, and 143 each coordinate hydrogencarbonate. Tyrosine 211 provides a ligand contact to Fe(3+). Fe(3+) is bound at residue histidine 272. Catalysis depends on serine 278, which acts as the Nucleophile. 2 disulfide bridges follow: cysteine 367–cysteine 399 and cysteine 377–cysteine 390. N-linked (GlcNAc...) asparagine glycosylation is present at asparagine 385. Fe(3+)-binding residues include aspartate 414 and aspartate 452. 4 disulfides stabilise this stretch: cysteine 476–cysteine 551, cysteine 510–cysteine 524, cysteine 521–cysteine 534, and cysteine 592–cysteine 606. Threonine 478, arginine 482, alanine 484, and glycine 485 together coordinate hydrogencarbonate. The N-linked (GlcNAc...) asparagine glycan is linked to asparagine 495. A Fe(3+)-binding site is contributed by tyrosine 545. Histidine 614 serves as a coordination point for Fe(3+).

This sequence belongs to the transferrin family. Monomer. Found in a complex with LTF, CLU, EPPIN and SEMG1. Interacts with prey activated coagulation factor X; the interaction inhibits coagulation factor X catalytic activity. Found in a complex with MPO and LTF; interacts directly with CP, allows Fe(3+) incorporation into LTF and activation of CP ferroxidase activity. In terms of processing, N-glycosylated. Glycosylation is important for draculin anticoagulant activity. Probably also O-glycosylated. As to expression, expressed in the submaxillary gland and secreted in the saliva (at protein level).

It is found in the secreted. Its function is as follows. Transferrins are iron binding transport proteins which can bind two Fe(3+) ions in association with the binding of an anion, usually bicarbonate. Major iron-binding and multifunctional protein found in exocrine fluids such as breast milk and mucosal secretions. Has antimicrobial activity. Antimicrobial properties may include bacteriostasis, which is related to its ability to sequester free iron and thus inhibit microbial growth, as well as direct bactericidal properties leading to the release of lipopolysaccharides from the bacterial outer membrane. May have anabolic, differentiating and anti-apoptotic effects on osteoblasts and may also inhibit osteoclastogenesis, possibly playing a role in the regulation of bone growth. May interfere with the lipopolysaccharide (LPS)-stimulated TLR4 signaling. Functionally, the lactotransferrin transferrin-like domain 1 functions as a serine protease of the peptidase S60 family that cuts arginine rich regions. This function contributes to the antimicrobial activity. Shows a preferential cleavage at -Arg-Ser-Arg-Arg-|- and -Arg-Arg-Ser-Arg-|-, and of Z-Phe-Arg-|-aminomethylcoumarin sites. In terms of biological role, acts as an anticoagulant of the blood coagulation cascade of the bat's prey by inhibiting coagulation factor IX and activated coagulation factor X. This chain is Lactotransferrin, found in Desmodus rotundus (Vampire bat).